Consider the following 475-residue polypeptide: Ribulose bisphosphate carboxylase large chain (475 aa).

Residues 1–2 constitute a propeptide that is removed on maturation; it reads MS. An N-acetylproline modification is found at proline 3. Lysine 14 is subject to N6,N6,N6-trimethyllysine. Substrate contacts are provided by asparagine 123 and threonine 173. Catalysis depends on lysine 175, which acts as the Proton acceptor. Lysine 177 contributes to the substrate binding site. 3 residues coordinate Mg(2+): lysine 201, aspartate 203, and glutamate 204. Lysine 201 is modified (N6-carboxylysine). The active-site Proton acceptor is histidine 294. Residues arginine 295, histidine 327, and serine 379 each coordinate substrate.

It belongs to the RuBisCO large chain family. Type I subfamily. In terms of assembly, heterohexadecamer of 8 large chains and 8 small chains; disulfide-linked. The disulfide link is formed within the large subunit homodimers. Requires Mg(2+) as cofactor. In terms of processing, the disulfide bond which can form in the large chain dimeric partners within the hexadecamer appears to be associated with oxidative stress and protein turnover.

It is found in the plastid. Its subcellular location is the chloroplast. The catalysed reaction is 2 (2R)-3-phosphoglycerate + 2 H(+) = D-ribulose 1,5-bisphosphate + CO2 + H2O. The enzyme catalyses D-ribulose 1,5-bisphosphate + O2 = 2-phosphoglycolate + (2R)-3-phosphoglycerate + 2 H(+). Functionally, ruBisCO catalyzes two reactions: the carboxylation of D-ribulose 1,5-bisphosphate, the primary event in carbon dioxide fixation, as well as the oxidative fragmentation of the pentose substrate in the photorespiration process. Both reactions occur simultaneously and in competition at the same active site. This chain is Ribulose bisphosphate carboxylase large chain, found in Ostrya virginiana (American hophornbeam).